Reading from the N-terminus, the 80-residue chain is MGGGSQVEGERALVQVLVRDNNVDQALKALKKKMQREGVFREMKLRRNFEKPSEKRAREKAEAVRRARKLERKRLEREGF.

It belongs to the bacterial ribosomal protein bS21 family.

The sequence is that of Small ribosomal subunit protein bS21 from Rhodospirillum rubrum (strain ATCC 11170 / ATH 1.1.1 / DSM 467 / LMG 4362 / NCIMB 8255 / S1).